Here is a 545-residue protein sequence, read N- to C-terminus: Threonine--tRNA ligase catalytic subunit (545 aa).

Residues 139–433 are catalytic; sequence DHRLIGEKLD…LLEHFKGKLP (295 aa). Cys231, His282, and His410 together coordinate Zn(2+).

This sequence belongs to the class-II aminoacyl-tRNA synthetase family. Homodimer. Probably interacts with its editing subunit. Zn(2+) serves as cofactor.

The protein localises to the cytoplasm. It carries out the reaction tRNA(Thr) + L-threonine + ATP = L-threonyl-tRNA(Thr) + AMP + diphosphate + H(+). In terms of biological role, catalyzes the attachment of threonine to tRNA(Thr) in a two-step reaction: L-threonine is first activated by ATP to form Thr-AMP and then transferred to the acceptor end of tRNA(Thr). Also activates L-serine and transfers it to tRNA(Thr) but cannot deacylate incorrectly charged amino acid; unlike most archaea the editing function is found in a freestanding protein. This Saccharolobus islandicus (strain M.16.4 / Kamchatka #3) (Sulfolobus islandicus) protein is Threonine--tRNA ligase catalytic subunit.